The sequence spans 217 residues: UPF0502 protein ASA_1460 (217 aa).

Belongs to the UPF0502 family.

The polypeptide is UPF0502 protein ASA_1460 (Aeromonas salmonicida (strain A449)).